We begin with the raw amino-acid sequence, 228 residues long: PKHD-type hydroxylase Vapar_1809 (228 aa).

One can recognise a Fe2OG dioxygenase domain in the interval glutamine 78–serine 179. Fe cation contacts are provided by histidine 97, aspartate 99, and histidine 160. 2-oxoglutarate is bound at residue arginine 170.

Fe(2+) serves as cofactor. The cofactor is L-ascorbate.

The protein is PKHD-type hydroxylase Vapar_1809 of Variovorax paradoxus (strain S110).